The following is a 651-amino-acid chain: Translation factor GUF1 homolog, mitochondrial (651 aa).

A mitochondrion-targeting transit peptide spans Met1–Phe26. One can recognise a tr-type G domain in the interval Lys51–Lys228. GTP is bound by residues Ala60–Ser67, Asp121–His125, and Asn175–Asp178.

Belongs to the TRAFAC class translation factor GTPase superfamily. Classic translation factor GTPase family. LepA subfamily.

Its subcellular location is the mitochondrion inner membrane. The enzyme catalyses GTP + H2O = GDP + phosphate + H(+). In terms of biological role, promotes mitochondrial protein synthesis. May act as a fidelity factor of the translation reaction, by catalyzing a one-codon backward translocation of tRNAs on improperly translocated ribosomes. Binds to mitochondrial ribosomes in a GTP-dependent manner. The chain is Translation factor GUF1 homolog, mitochondrial from Brugia malayi (Filarial nematode worm).